A 361-amino-acid polypeptide reads, in one-letter code: Spermidine/putrescine import ATP-binding protein PotA (361 aa).

Positions Leu4–Ile234 constitute an ABC transporter domain. Gly36 to Thr43 lines the ATP pocket.

This sequence belongs to the ABC transporter superfamily. Spermidine/putrescine importer (TC 3.A.1.11.1) family. The complex is composed of two ATP-binding proteins (PotA), two transmembrane proteins (PotB and PotC) and a solute-binding protein (PotD).

Its subcellular location is the cell inner membrane. The enzyme catalyses ATP + H2O + polyamine-[polyamine-binding protein]Side 1 = ADP + phosphate + polyamineSide 2 + [polyamine-binding protein]Side 1.. Part of the ABC transporter complex PotABCD involved in spermidine/putrescine import. Responsible for energy coupling to the transport system. This is Spermidine/putrescine import ATP-binding protein PotA from Nitrosomonas europaea (strain ATCC 19718 / CIP 103999 / KCTC 2705 / NBRC 14298).